The primary structure comprises 172 residues: Ribosome maturation factor RimP (172 aa).

It belongs to the RimP family.

It localises to the cytoplasm. Its function is as follows. Required for maturation of 30S ribosomal subunits. This is Ribosome maturation factor RimP from Nitratidesulfovibrio vulgaris (strain ATCC 29579 / DSM 644 / CCUG 34227 / NCIMB 8303 / VKM B-1760 / Hildenborough) (Desulfovibrio vulgaris).